The primary structure comprises 79 residues: Serine protease inhibitor Kazal-type 1 (79 aa).

The signal sequence occupies residues 1-23 (MKVTGIFLLSALALLSLSGNTGA). The Kazal-like domain occupies 26 to 79 (LGREAKCYNELNGCTKIYDPVCGTDGNTYPNECVLCFENRKRQTSILIQKSGPC). 3 cysteine pairs are disulfide-bonded: Cys-32–Cys-61, Cys-39–Cys-58, and Cys-47–Cys-79.

It localises to the secreted. Functionally, serine protease inhibitor which exhibits anti-trypsin activity. In the pancreas, protects against trypsin-catalyzed premature activation of zymogens. In the male reproductive tract, binds to sperm heads where it modulates sperm capacitance by inhibiting calcium uptake and nitrogen oxide (NO) production. The protein is Serine protease inhibitor Kazal-type 1 (SPINK1) of Homo sapiens (Human).